Here is a 733-residue protein sequence, read N- to C-terminus: Probable Rho-GTPase-activating protein 6 (733 aa).

Residues 116 to 125 (VFNESKSSSP) are compositionally biased toward polar residues. A disordered region spans residues 116–135 (VFNESKSSSPPDAHTDKYFT). Position 141 is a phosphothreonine (Thr-141). Residues 174–256 (RFDKPSNNGP…SKGSWSSILR (83 aa)) form a disordered region. Positions 179-195 (SNNGPLGRSSLNLSSLS) are enriched in low complexity. Polar residues-rich tracts occupy residues 196 to 218 (HELQTSQDSPSLSATNQLSSSDT) and 225 to 240 (PPSSFGSQRQFNASQD). The Rho-GAP domain occupies 312-546 (TNLCKFTFPT…GLIIHWPEVL (235 aa)). A disordered region spans residues 692–713 (PVTVTASSETNKKSQKINKKAS). A compositionally biased stretch (basic residues) spans 704–713 (KSQKINKKAS).

This Schizosaccharomyces pombe (strain 972 / ATCC 24843) (Fission yeast) protein is Probable Rho-GTPase-activating protein 6 (rga6).